Reading from the N-terminus, the 379-residue chain is uncharacterized protein (379 aa).

Residues 9–26 (YFQLITTIFLISSITIAA) traverse the membrane as a helical segment.

This sequence to A.liquefaciens L-sorbosone dehydrogenase.

It localises to the membrane. This is an uncharacterized protein from Borreliella burgdorferi (strain ATCC 35210 / DSM 4680 / CIP 102532 / B31) (Borrelia burgdorferi).